A 461-amino-acid chain; its full sequence is V-type ATP synthase beta chain (461 aa).

The protein belongs to the ATPase alpha/beta chains family.

Functionally, produces ATP from ADP in the presence of a proton gradient across the membrane. The V-type beta chain is a regulatory subunit. The chain is V-type ATP synthase beta chain from Clostridium botulinum (strain 657 / Type Ba4).